Reading from the N-terminus, the 859-residue chain is Sulfate permease 1 (859 aa).

N-linked (GlcNAc...) asparagine glycans are attached at residues Asn-51 and Asn-93. A run of 8 helical transmembrane segments spans residues 94-114 (LTAKSAGSYLVSLFPIIKWFP), 116-136 (YNFTWGYADLVAGITVGCVLV), 148-168 (LSPEYGLYSSFIGAFIYSLFA), 173-193 (VCIGPVAVMSLQTAKVIAEVL), 206-226 (PIIATTLCLLCGIVATGLGIL), 234-254 (LISLNAVAGFMTGSAFNIIWG), 292-312 (FGLIPLVILYVWKWWCGTFGI), and 332-352 (FYFYAQAMRNAVVIVVFTAIS). Residues Asn-358 and Asn-391 are each glycosylated (N-linked (GlcNAc...) asparagine). 4 helical membrane passes run 395–415 (EIPASIIVLVLEHIAISKSFG), 428–448 (LIAIGVTNLIGTFFHSYPATG), 468–488 (VFTGGCVLLALYCLTDAFFFI), and 525–545 (FIVTVFITVFSSIENGIYFAM). N-linked (GlcNAc...) asparagine glycans are attached at residues Asn-630, Asn-653, and Asn-718. An STAS domain is found at 630 to 808 (NTTVRPPPPG…SIIAGHSSFH (179 aa)).

It belongs to the SLC26A/SulP transporter (TC 2.A.53) family.

Its subcellular location is the membrane. High affinity uptake of sulfate into the cell. This Saccharomyces cerevisiae (strain ATCC 204508 / S288c) (Baker's yeast) protein is Sulfate permease 1 (SUL1).